The following is a 41-amino-acid chain: Trypsin inhibitor 2c (41 aa).

Disulfide bonds link Cys-11–Cys-32 and Cys-15–Cys-28.

In terms of biological role, inhibits bovine trypsin with a Ki of 0.174 nM and trypsin-like proteases from G.mellonella larvae. Has no activity against serine proteases chymotrypsin, subtilisin and elastase. Has no activity against cysteine proteases from beetle gut. The protein is Trypsin inhibitor 2c of Fagopyrum esculentum (Common buckwheat).